A 306-amino-acid polypeptide reads, in one-letter code: Large ribosomal subunit protein bL19m (306 aa).

A compositionally biased stretch (basic and acidic residues) spans 34–43 (ENQEEQKKEA). The disordered stretch occupies residues 34-53 (ENQEEQKKEAPPTTPTSPVN).

Belongs to the bacterial ribosomal protein bL19 family. As to quaternary structure, component of the mitochondrial ribosome large subunit (39S) which comprises a 16S rRNA and about 50 distinct proteins.

The protein localises to the mitochondrion. In Drosophila melanogaster (Fruit fly), this protein is Large ribosomal subunit protein bL19m (mRpL19).